The primary structure comprises 418 residues: Tyrosine--tRNA ligase (418 aa).

Position 34 (Tyr34) interacts with L-tyrosine. The 'HIGH' region motif lies at 39-48 (PTADSLHLGH). Residues Tyr169 and Gln173 each contribute to the L-tyrosine site. The 'KMSKS' region motif lies at 229 to 233 (KFGKS). ATP is bound at residue Lys232. Residues 352 to 418 (HNIVEILVAA…GKKKYAVLTY (67 aa)) form the S4 RNA-binding domain.

The protein belongs to the class-I aminoacyl-tRNA synthetase family. TyrS type 1 subfamily. Homodimer.

The protein localises to the cytoplasm. The catalysed reaction is tRNA(Tyr) + L-tyrosine + ATP = L-tyrosyl-tRNA(Tyr) + AMP + diphosphate + H(+). Its function is as follows. Catalyzes the attachment of tyrosine to tRNA(Tyr) in a two-step reaction: tyrosine is first activated by ATP to form Tyr-AMP and then transferred to the acceptor end of tRNA(Tyr). This is Tyrosine--tRNA ligase from Streptococcus pyogenes serotype M1.